Reading from the N-terminus, the 201-residue chain is Peptidyl-tRNA hydrolase (201 aa).

Tyr-15 serves as a coordination point for tRNA. Catalysis depends on His-20, which acts as the Proton acceptor. Residues Tyr-66, Asn-68, and Asn-114 each coordinate tRNA.

It belongs to the PTH family. As to quaternary structure, monomer.

It localises to the cytoplasm. The enzyme catalyses an N-acyl-L-alpha-aminoacyl-tRNA + H2O = an N-acyl-L-amino acid + a tRNA + H(+). Its function is as follows. Hydrolyzes ribosome-free peptidyl-tRNAs (with 1 or more amino acids incorporated), which drop off the ribosome during protein synthesis, or as a result of ribosome stalling. Catalyzes the release of premature peptidyl moieties from peptidyl-tRNA molecules trapped in stalled 50S ribosomal subunits, and thus maintains levels of free tRNAs and 50S ribosomes. This chain is Peptidyl-tRNA hydrolase, found in Burkholderia thailandensis (strain ATCC 700388 / DSM 13276 / CCUG 48851 / CIP 106301 / E264).